A 361-amino-acid chain; its full sequence is Homocitrate synthase (361 aa).

In terms of domain architecture, Pyruvate carboxyltransferase spans 1 to 249 (MILDSTLREG…VKKYRLDKLY (249 aa)). R8 provides a ligand contact to 2-oxoglutarate. E9 serves as a coordination point for Mg(2+). 2-oxoglutarate-binding residues include H68, R128, and T162. Mg(2+) is bound by residues H188 and H190. The active-site Proton acceptor is the H282.

It belongs to the alpha-IPM synthase/homocitrate synthase family. Homocitrate synthase LYS20/LYS21 subfamily. It depends on Mg(2+) as a cofactor. The cofactor is Mn(2+).

The enzyme catalyses acetyl-CoA + 2-oxoglutarate + H2O = (2R)-homocitrate + CoA + H(+). It participates in amino-acid biosynthesis; L-lysine biosynthesis via AAA pathway; L-alpha-aminoadipate from 2-oxoglutarate: step 1/5. Functionally, catalyzes the aldol-type condensation of 2-oxoglutarate with acetyl-CoA to yield homocitrate. Carries out the first step of the alpha-aminoadipate (AAA) lysine biosynthesis pathway. The chain is Homocitrate synthase from Pyrococcus horikoshii (strain ATCC 700860 / DSM 12428 / JCM 9974 / NBRC 100139 / OT-3).